The sequence spans 267 residues: Orotidine 5'-phosphate decarboxylase (267 aa).

Ser-2 is modified (N-acetylserine). Substrate contacts are provided by residues Asp-37, 59 to 61 (KTH), and 91 to 100 (DRKFADIGNT). Lys-93 acts as the Proton donor in catalysis. Glycyl lysine isopeptide (Lys-Gly) (interchain with G-Cter in ubiquitin) cross-links involve residues Lys-93 and Lys-209. 2 residues coordinate substrate: Tyr-217 and Arg-235. Lys-253 is covalently cross-linked (Glycyl lysine isopeptide (Lys-Gly) (interchain with G-Cter in ubiquitin)).

Belongs to the OMP decarboxylase family.

It carries out the reaction orotidine 5'-phosphate + H(+) = UMP + CO2. It functions in the pathway pyrimidine metabolism; UMP biosynthesis via de novo pathway; UMP from orotate: step 2/2. This Saccharomyces cerevisiae (strain ATCC 204508 / S288c) (Baker's yeast) protein is Orotidine 5'-phosphate decarboxylase (URA3).